The chain runs to 396 residues: Ribosomal RNA large subunit methyltransferase I (396 aa).

A PUA domain is found at 2–79; sequence TSAVYLQAGR…EKEVIDQHFF (78 aa).

The protein belongs to the methyltransferase superfamily. RlmI family.

The protein localises to the cytoplasm. The enzyme catalyses cytidine(1962) in 23S rRNA + S-adenosyl-L-methionine = 5-methylcytidine(1962) in 23S rRNA + S-adenosyl-L-homocysteine + H(+). In terms of biological role, specifically methylates the cytosine at position 1962 (m5C1962) of 23S rRNA. The sequence is that of Ribosomal RNA large subunit methyltransferase I from Pseudoalteromonas translucida (strain TAC 125).